A 697-amino-acid polypeptide reads, in one-letter code: Long-chain-fatty-acid--CoA ligase 6 (697 aa).

The chain crosses the membrane as a helical; Signal-anchor for type III membrane protein span at residues 25-45 (LSATTLVSMGALAAILAYWLT). Residues 46–697 (HRPKALQPPC…QIEELYSISM (652 aa)) lie on the Cytoplasmic side of the membrane.

The protein belongs to the ATP-dependent AMP-binding enzyme family. It depends on Mg(2+) as a cofactor. In terms of tissue distribution, expressed predominantly in brain and, to a much lesser extent, in heart and adrenal.

Its subcellular location is the mitochondrion outer membrane. The protein resides in the peroxisome membrane. It localises to the microsome membrane. It is found in the endoplasmic reticulum membrane. It catalyses the reaction a long-chain fatty acid + ATP + CoA = a long-chain fatty acyl-CoA + AMP + diphosphate. The catalysed reaction is (5Z,8Z,11Z,14Z)-eicosatetraenoate + ATP + CoA = (5Z,8Z,11Z,14Z)-eicosatetraenoyl-CoA + AMP + diphosphate. The enzyme catalyses 15-hydroxy-(5Z,8Z,11Z,13E)-eicosatetraenoate + ATP + CoA = 15-hydroxy-(5Z,8Z,11Z,13E)-eicosatetraenoyl-CoA + AMP + diphosphate. It carries out the reaction 12-hydroxy-(5Z,8Z,10E,14Z)-eicosatetraenoate + ATP + CoA = 12-hydroxy-(5Z,8Z,10E,14Z)-eicosatetraenoyl-CoA + AMP + diphosphate. It catalyses the reaction 5-hydroxy-(6E,8Z,11Z,14Z)-eicosatetraenoate + ATP + CoA = 5-hydroxy-(6E,8Z,11Z,14Z)-eicosatetraenoyl-CoA + AMP + diphosphate. The catalysed reaction is hexadecanoate + ATP + CoA = hexadecanoyl-CoA + AMP + diphosphate. The enzyme catalyses (E)-hexadec-2-enoate + ATP + CoA = (2E)-hexadecenoyl-CoA + AMP + diphosphate. Functionally, catalyzes the conversion of long-chain fatty acids to their active form acyl-CoA for both synthesis of cellular lipids, and degradation via beta-oxidation. Plays an important role in fatty acid metabolism in brain and the acyl-CoAs produced may be utilized exclusively for the synthesis of the brain lipid. The chain is Long-chain-fatty-acid--CoA ligase 6 from Rattus norvegicus (Rat).